Consider the following 356-residue polypeptide: Caspase activity and apoptosis inhibitor 1 (356 aa).

A compositionally biased stretch (basic residues) spans 1–14 (MTGKKSSREKRRKR). Disordered stretches follow at residues 1–24 (MTGK…ASLA) and 54–80 (VAGG…GSLQ). Ser-68 is modified (phosphoserine). Thr-69 carries the post-translational modification Phosphothreonine. Lys-84 participates in a covalent cross-link: Glycyl lysine isopeptide (Lys-Gly) (interchain with G-Cter in SUMO2). Ser-100 and Ser-183 each carry phosphoserine. Positions 208-234 (DSTSSLRENKQPEVLESKQGKGEDSDV) are disordered. A compositionally biased stretch (basic and acidic residues) spans 214 to 231 (RENKQPEVLESKQGKGED). Residues 276–306 (ENTVQSEAGQIDDLERDIEKSVNEILGLAES) are a coiled coil. Residue Ser-307 is modified to Phosphoserine.

In terms of biological role, anti-apoptotic protein that modulates a caspase-10 dependent mitochondrial caspase-3/9 feedback amplification loop. The polypeptide is Caspase activity and apoptosis inhibitor 1 (Caap1) (Mus musculus (Mouse)).